Reading from the N-terminus, the 448-residue chain is Tumor necrosis factor receptor superfamily member EDAR (448 aa).

Positions M1–A26 are cleaved as a signal peptide. At E27–A187 the chain is on the extracellular side. TNFR-Cys repeat units lie at residues N30–C71, P73–C113, and P115–G150. 6 cysteine pairs are disulfide-bonded: C31/C44, C47/C60, C50/C71, C74/C87, C93/C113, and C135/C148. N38 is a glycosylation site (N-linked (GlcNAc...) asparagine). The chain crosses the membrane as a helical span at residues L188–F208. Residues Y209 to S448 are Cytoplasmic-facing. Low complexity predominate over residues C220–A229. A disordered region spans residues C220 to S297. The span at L258–S283 shows a compositional bias: polar residues. A Death domain is found at R358–I431.

As to quaternary structure, binds to EDARADD. Associates with TRAF1, TRAF2, TRAF3 and NIK.

The protein resides in the membrane. Its function is as follows. Receptor for EDA isoform TAA, but not for EDA isoform TA-2. May mediate the activation of NF-kappa-B and JNK. May promote caspase-independent cell death. The chain is Tumor necrosis factor receptor superfamily member EDAR (Edar) from Mus musculus (Mouse).